A 324-amino-acid chain; its full sequence is uncharacterized protein (324 aa).

Transmembrane regions (helical) follow at residues 4 to 24, 63 to 83, 106 to 128, 132 to 151, 179 to 199, 209 to 229, 246 to 266, and 282 to 302; these read GNKV…PEFM, AALL…EGIL, ALFY…ISFL, WQVQ…SHLL, LADI…AVTL, GLDG…LVIM, LETA…LYTL, and GTWK…GWFM.

The protein belongs to the TerC family.

Its subcellular location is the cell membrane. This is an uncharacterized protein from Bacillus subtilis (strain 168).